A 967-amino-acid polypeptide reads, in one-letter code: Zinc finger protein with KRAB and SCAN domains 2 (967 aa).

Lysine 22 participates in a covalent cross-link: Glycyl lysine isopeptide (Lys-Gly) (interchain with G-Cter in SUMO2). Residues 45–127 (RKCFRQFCYE…ALVVHLEKET (83 aa)) form the SCAN box domain. Residues 150 to 205 (WEVADFQPEQVETQPRAVSREEPGSLHSGHQEQLNRKRERRPLPKNARPSPWVPAL) are disordered. Residues 167 to 185 (VSREEPGSLHSGHQEQLNR) show a composition bias toward basic and acidic residues. A KRAB domain is found at 229–300 (VKDVHVARGF…GLHSSNKRSI (72 aa)). Glycyl lysine isopeptide (Lys-Gly) (interchain with G-Cter in SUMO2) cross-links involve residues lysine 242, lysine 259, lysine 277, lysine 337, lysine 482, and lysine 529. Residues 586 to 602 (RASAPSPSTPEEVPSPS) are compositionally biased toward low complexity. Residues 586-626 (RASAPSPSTPEEVPSPSRQERGGIEVEPQEPTGWEPEETSQ) are disordered. Phosphoserine is present on residues serine 591 and serine 600. Residues lysine 734, lysine 745, and lysine 752 each participate in a glycyl lysine isopeptide (Lys-Gly) (interchain with G-Cter in SUMO2) cross-link. 6 consecutive C2H2-type zinc fingers follow at residues 775 to 797 (YKCG…QRIH), 803 to 825 (FKCL…QRIH), 831 to 853 (YRCG…QRTH), 859 to 881 (YQCG…RRVH), 887 to 909 (YKCV…RRIH), and 915 to 937 (YGCA…REVH). The interval 941–967 (KPLPHPPSLYCPENPHKGKTDEFRKTF) is disordered. The segment covering 954–967 (NPHKGKTDEFRKTF) has biased composition (basic and acidic residues).

It belongs to the krueppel C2H2-type zinc-finger protein family.

Its subcellular location is the nucleus. Its function is as follows. May be involved in transcriptional regulation. The protein is Zinc finger protein with KRAB and SCAN domains 2 (ZKSCAN2) of Homo sapiens (Human).